Reading from the N-terminus, the 353-residue chain is GTPase Obg (353 aa).

The Obg domain maps to 1 to 159 (MKFLDEAKVY…RWIWLRLKLI (159 aa)). An OBG-type G domain is found at 160-327 (ADAGLVGLPN…ALRALAAVIG (168 aa)). GTP-binding positions include 166-173 (GLPNAGKS), 191-195 (FTTLH), 212-215 (DIPG), 279-282 (NKID), and 308-310 (SGV). 2 residues coordinate Mg(2+): S173 and T193.

The protein belongs to the TRAFAC class OBG-HflX-like GTPase superfamily. OBG GTPase family. As to quaternary structure, monomer. The cofactor is Mg(2+).

It localises to the cytoplasm. In terms of biological role, an essential GTPase which binds GTP, GDP and possibly (p)ppGpp with moderate affinity, with high nucleotide exchange rates and a fairly low GTP hydrolysis rate. Plays a role in control of the cell cycle, stress response, ribosome biogenesis and in those bacteria that undergo differentiation, in morphogenesis control. This Rhodopseudomonas palustris (strain BisB5) protein is GTPase Obg.